The following is a 468-amino-acid chain: Plant UBX domain-containing protein 7 (468 aa).

At Met1 the chain carries N-acetylmethionine. The region spanning 7 to 48 is the UBA-like domain; sequence SGDQQRLVSSFLEIAVGQTAETARQFLQATSWKLEEAIQLFY. Disordered regions lie at residues 138–168 and 299–329; these read KSPG…SAPR and HFAS…KDEE. Over residues 150–166 the composition is skewed to low complexity; that stretch reads SSASASASASASESASA. The UIM domain occupies 328–347; sequence EEEEELQRALAASLEDNNMK. The 82-residue stretch at 385-466 folds into the UBX domain; sequence DRSLQCRVGI…GVANSMISAT (82 aa).

In terms of assembly, interacts with CDC48A via its UBX domain and with ubiquitin via its N-terminal UBA-like domain. Expressed broadly in sporophyte and gametophyte cells.

It localises to the nucleus. Its function is as follows. Acts as a bridge between CDC48A and ubiquitin, suggesting a role in targeted protein degradation. This Arabidopsis thaliana (Mouse-ear cress) protein is Plant UBX domain-containing protein 7.